A 423-amino-acid chain; its full sequence is Serine hydroxymethyltransferase (423 aa).

Residues leucine 120 and 124–126 (GHL) contribute to the (6S)-5,6,7,8-tetrahydrofolate site. Lysine 229 carries the N6-(pyridoxal phosphate)lysine modification. Residues glutamate 245 and 353–355 (SPF) each bind (6S)-5,6,7,8-tetrahydrofolate.

This sequence belongs to the SHMT family. In terms of assembly, homodimer. The cofactor is pyridoxal 5'-phosphate.

Its subcellular location is the cytoplasm. It carries out the reaction (6R)-5,10-methylene-5,6,7,8-tetrahydrofolate + glycine + H2O = (6S)-5,6,7,8-tetrahydrofolate + L-serine. Its pathway is one-carbon metabolism; tetrahydrofolate interconversion. It participates in amino-acid biosynthesis; glycine biosynthesis; glycine from L-serine: step 1/1. Its function is as follows. Catalyzes the reversible interconversion of serine and glycine with tetrahydrofolate (THF) serving as the one-carbon carrier. This reaction serves as the major source of one-carbon groups required for the biosynthesis of purines, thymidylate, methionine, and other important biomolecules. Also exhibits THF-independent aldolase activity toward beta-hydroxyamino acids, producing glycine and aldehydes, via a retro-aldol mechanism. The protein is Serine hydroxymethyltransferase of Prochlorococcus marinus (strain MIT 9312).